The chain runs to 76 residues: MQTVLFALLRFYKIAVSPMLGNRCRFYPSCSDYAREAIQYHGAARGTYLAARRLCRCHPFSAGGIDLVPPPTPKKR.

It belongs to the UPF0161 family.

The protein localises to the cell inner membrane. Functionally, could be involved in insertion of integral membrane proteins into the membrane. This is Putative membrane protein insertion efficiency factor from Paraburkholderia phymatum (strain DSM 17167 / CIP 108236 / LMG 21445 / STM815) (Burkholderia phymatum).